Reading from the N-terminus, the 345-residue chain is Achaete-scute complex protein T4 (345 aa).

The segment covering 78-92 (SESVSSLSPGSSPAP) has biased composition (low complexity). A disordered region spans residues 78 to 109 (SESVSSLSPGSSPAPYNVDQSQSVQRRNARER). Residues 99 to 162 (QSVQRRNARE…RIAVEYIRRL (64 aa)) form the bHLH domain.

Efficient DNA binding requires dimerization with another bHLH protein. Interacts with da (via bHLH motif). Interacts with Bap60. In terms of tissue distribution, l(1)SC, SC and AC strongly label the presumptive stomatogastric nervous system, while ASE is more prominent in the presumptive procephalic lobe. Associates with the somatic nuclei through nuclear cycles 9 and 10. During nuclear cycle 11 distributes uniformly in the embryo.

Functionally, AS-C proteins are involved in the determination of the neuronal precursors in the peripheral nervous system and the central nervous system. Also involved in sex determination and dosage compensation. The sequence is that of Achaete-scute complex protein T4 (sc) from Drosophila melanogaster (Fruit fly).